The sequence spans 447 residues: Argininosuccinate synthase (447 aa).

ATP contacts are provided by residues 17–25 and Ala-43; that span reads AFSGGLDTS. Tyr-99 lines the L-citrulline pocket. Residues Gly-129 and Thr-131 each contribute to the ATP site. L-aspartate is bound by residues Thr-131, Asn-135, and Asp-136. An L-citrulline-binding site is contributed by Asn-135. Asp-136 provides a ligand contact to ATP. Arg-139 and Ser-192 together coordinate L-citrulline. ATP is bound at residue Asp-194. L-citrulline contacts are provided by Thr-201, Glu-203, and Glu-280.

This sequence belongs to the argininosuccinate synthase family. Type 2 subfamily. In terms of assembly, homotetramer.

The protein resides in the cytoplasm. It carries out the reaction L-citrulline + L-aspartate + ATP = 2-(N(omega)-L-arginino)succinate + AMP + diphosphate + H(+). It participates in amino-acid biosynthesis; L-arginine biosynthesis; L-arginine from L-ornithine and carbamoyl phosphate: step 2/3. The sequence is that of Argininosuccinate synthase from Salmonella schwarzengrund (strain CVM19633).